The sequence spans 113 residues: Nucleoid-associated protein P9303_00241 (113 aa).

The tract at residues 90 to 113 is disordered; it reads TTTMKEQMEELTGGLNLNLPGMSD.

The protein belongs to the YbaB/EbfC family. Homodimer.

The protein resides in the cytoplasm. The protein localises to the nucleoid. Its function is as follows. Binds to DNA and alters its conformation. May be involved in regulation of gene expression, nucleoid organization and DNA protection. The sequence is that of Nucleoid-associated protein P9303_00241 from Prochlorococcus marinus (strain MIT 9303).